Here is a 67-residue protein sequence, read N- to C-terminus: Large ribosomal subunit protein uL29 (67 aa).

It belongs to the universal ribosomal protein uL29 family.

The polypeptide is Large ribosomal subunit protein uL29 (rpmC) (Thermus thermophilus).